The primary structure comprises 738 residues: Catalase-peroxidase (738 aa).

The segment at 1 to 24 (MSEEHPPIAEANSQPSNGCPVAGG) is disordered. A cross-link (tryptophyl-tyrosyl-methioninium (Trp-Tyr) (with M-257)) is located at residues 108-231 (WHAAGTYRVG…LAAVQMGLIY (124 aa)). Catalysis depends on histidine 109, which acts as the Proton acceptor. A cross-link (tryptophyl-tyrosyl-methioninium (Tyr-Met) (with W-108)) is located at residues 231-257 (YVNPEGPNGNPDPLAAAIDIRETFGRM). Histidine 272 is a heme b binding site.

It belongs to the peroxidase family. Peroxidase/catalase subfamily. In terms of assembly, homodimer or homotetramer. Requires heme b as cofactor. In terms of processing, formation of the three residue Trp-Tyr-Met cross-link is important for the catalase, but not the peroxidase activity of the enzyme.

The catalysed reaction is H2O2 + AH2 = A + 2 H2O. It catalyses the reaction 2 H2O2 = O2 + 2 H2O. Bifunctional enzyme with both catalase and broad-spectrum peroxidase activity. The protein is Catalase-peroxidase of Mycobacteroides abscessus (strain ATCC 19977 / DSM 44196 / CCUG 20993 / CIP 104536 / JCM 13569 / NCTC 13031 / TMC 1543 / L948) (Mycobacterium abscessus).